The sequence spans 301 residues: Type II restriction enzyme BslI subunit beta (301 aa).

The CHC2-type zinc finger occupies 62–82 (CPDGHTKWNQNLTKEMTCSEC).

In terms of assembly, heterotetramer of two alpha and two beta subunits. The alpha subunit is believed to be responsible for DNA recognition, while the beta subunit is thought to mediate cleavage. The cofactor is Zn(2+).

The catalysed reaction is Endonucleolytic cleavage of DNA to give specific double-stranded fragments with terminal 5'-phosphates.. A P subtype restriction enzyme that recognizes the double-stranded sequence 5'-CCN(7)GG-3' and cleaves after N-7. The protein is Type II restriction enzyme BslI subunit beta of Bacillus sp. (strain NEB-606).